We begin with the raw amino-acid sequence, 249 residues long: Probable transcriptional regulatory protein Sare_1779 (249 aa).

Belongs to the TACO1 family.

The protein localises to the cytoplasm. The protein is Probable transcriptional regulatory protein Sare_1779 of Salinispora arenicola (strain CNS-205).